The following is a 242-amino-acid chain: Probable L-ribulose-5-phosphate 4-epimerase UlaF (242 aa).

Substrate is bound by residues 31–32 (GN), 48–49 (SG), and 78–79 (SS). 3 residues coordinate Zn(2+): Asp80, His99, and His101. Residue Asp124 is the Proton donor/acceptor of the active site. His175 contributes to the Zn(2+) binding site. The Proton donor/acceptor role is filled by Tyr234.

Belongs to the aldolase class II family. AraD/FucA subfamily. It depends on Zn(2+) as a cofactor.

It carries out the reaction L-ribulose 5-phosphate = D-xylulose 5-phosphate. It participates in cofactor degradation; L-ascorbate degradation; D-xylulose 5-phosphate from L-ascorbate: step 4/4. Functionally, catalyzes the isomerization of L-ribulose 5-phosphate to D-xylulose 5-phosphate. Is involved in the anaerobic L-ascorbate utilization. The sequence is that of Probable L-ribulose-5-phosphate 4-epimerase UlaF from Mycoplasma pneumoniae (strain ATCC 29342 / M129 / Subtype 1) (Mycoplasmoides pneumoniae).